The sequence spans 264 residues: 3-methyl-2-oxobutanoate hydroxymethyltransferase (264 aa).

Mg(2+)-binding residues include D45 and D84. Residues 45–46 (DS), D84, and K112 each bind 3-methyl-2-oxobutanoate. Mg(2+) is bound at residue E114. E181 (proton acceptor) is an active-site residue.

The protein belongs to the PanB family. Homodecamer; pentamer of dimers. The cofactor is Mg(2+).

It localises to the cytoplasm. It carries out the reaction 3-methyl-2-oxobutanoate + (6R)-5,10-methylene-5,6,7,8-tetrahydrofolate + H2O = 2-dehydropantoate + (6S)-5,6,7,8-tetrahydrofolate. Its pathway is cofactor biosynthesis; (R)-pantothenate biosynthesis; (R)-pantoate from 3-methyl-2-oxobutanoate: step 1/2. Catalyzes the reversible reaction in which hydroxymethyl group from 5,10-methylenetetrahydrofolate is transferred onto alpha-ketoisovalerate to form ketopantoate. This Shewanella piezotolerans (strain WP3 / JCM 13877) protein is 3-methyl-2-oxobutanoate hydroxymethyltransferase.